A 404-amino-acid chain; its full sequence is Glycosyltransferase GlyB (404 aa).

The segment at 1-267 (MNTKSIVFNA…ILLRKDIISR (267 aa)) is GT8 domain. UDP contacts are provided by residues 9–14 (NADNDY) and 103–104 (DS). Residues Asp103, Asp105, and His228 each coordinate Mn(2+). 228-233 (HYTGVK) contacts UDP.

It in the N-terminal section; belongs to the glycosyltransferase 8 family.

Functionally, may be involved in the polymorphic O-glycosylation of the serine-rich repeat protein PsrP. Has equal hydrolytic activity against both UDP-galactose and UDP-glucose; no glycosyltransferase activity has been seen with tested substrates. The polypeptide is Glycosyltransferase GlyB (Streptococcus pneumoniae serotype 4 (strain ATCC BAA-334 / TIGR4)).